Reading from the N-terminus, the 448-residue chain is Exodeoxyribonuclease 7 large subunit (448 aa).

It belongs to the XseA family. Heterooligomer composed of large and small subunits.

The protein localises to the cytoplasm. It carries out the reaction Exonucleolytic cleavage in either 5'- to 3'- or 3'- to 5'-direction to yield nucleoside 5'-phosphates.. In terms of biological role, bidirectionally degrades single-stranded DNA into large acid-insoluble oligonucleotides, which are then degraded further into small acid-soluble oligonucleotides. The sequence is that of Exodeoxyribonuclease 7 large subunit from Photobacterium profundum (strain SS9).